The chain runs to 139 residues: Putative pre-16S rRNA nuclease (139 aa).

This sequence belongs to the YqgF nuclease family.

The protein localises to the cytoplasm. Functionally, could be a nuclease involved in processing of the 5'-end of pre-16S rRNA. The chain is Putative pre-16S rRNA nuclease from Streptococcus pneumoniae serotype 19F (strain G54).